Consider the following 430-residue polypeptide: MAITLRQSDADFEQRFAAFLTTKREVSEDVDAGVRQIIARVRAEGDAALIDYTQRFDRADLKSLGIAVSKQDIAAAYETADPKAIEALEFARDRIRSHHERQRPKDDRYTDATGVELGWRWTAIEAVGLYVPGGTASYPSSVLMNAVPARVAGVERVVMVVPAPGGIINPLVLVAADISGVTEIYRVGGAHAIAALAYGTETIKPVAKIVGPGNAYVAAAKRQVFGTVGIDMIAGPSEVLVVADGSNNADWIAADLLAQAEHDVSAQSILITDDPAFGKAVEQAVERQLQTLPRGETAAASWRDFGAVIEVATIEAALPLVDRIAAEHVELAIDDAEGFLSRMRNAGAVFLGRHTPEAIGDYVGGSNHVLPTARSARFSSGLSVLDFVKRTSILKLGPEQLRVLAPAAIALAKAEGLDAHGRSVAIRLNM.

Residues Ser237, Gln259, and His262 each contribute to the substrate site. Residues Gln259 and His262 each contribute to the Zn(2+) site. Active-site proton acceptor residues include Glu327 and His328. Substrate is bound by residues His328, Asp361, Glu415, and His420. Asp361 contributes to the Zn(2+) binding site. Residue His420 participates in Zn(2+) binding.

It belongs to the histidinol dehydrogenase family. Requires Zn(2+) as cofactor.

The catalysed reaction is L-histidinol + 2 NAD(+) + H2O = L-histidine + 2 NADH + 3 H(+). The protein operates within amino-acid biosynthesis; L-histidine biosynthesis; L-histidine from 5-phospho-alpha-D-ribose 1-diphosphate: step 9/9. Functionally, catalyzes the sequential NAD-dependent oxidations of L-histidinol to L-histidinaldehyde and then to L-histidine. The protein is Histidinol dehydrogenase of Mesorhizobium japonicum (strain LMG 29417 / CECT 9101 / MAFF 303099) (Mesorhizobium loti (strain MAFF 303099)).